Here is a 78-residue protein sequence, read N- to C-terminus: Short neurotoxin SNTX6 (78 aa).

The first 21 residues, 1–21, serve as a signal peptide directing secretion; the sequence is MKTLLLTFLVVTIVCLDLGYT. Disulfide bonds link C24–C40, C33–C58, C62–C70, and C71–C76.

It belongs to the three-finger toxin family. Short-chain subfamily. Expressed by the venom gland.

It localises to the secreted. In terms of biological role, this three-finger toxin binds and inhibits the nicotinic acetylcholine receptor (nAChR). The chain is Short neurotoxin SNTX6 from Ophiophagus hannah (King cobra).